The sequence spans 591 residues: CTP synthase 1 (591 aa).

Residues 300–554 (SIALVGKYTK…LAAAGRLQSY (255 aa)) form the Glutamine amidotransferase type-1 domain. Active-site for GATase activity residues include Cys399, His526, and Glu528. Phosphoserine occurs at positions 571 and 575.

This sequence belongs to the CTP synthase family.

The catalysed reaction is UTP + L-glutamine + ATP + H2O = CTP + L-glutamate + ADP + phosphate + 2 H(+). It participates in pyrimidine metabolism; CTP biosynthesis via de novo pathway; CTP from UDP: step 2/2. This enzyme is involved in the de novo synthesis of CTP, a precursor of DNA, RNA and phospholipids. Catalyzes the ATP-dependent amination of UTP to CTP with either L-glutamine or ammonia as a source of nitrogen. The protein is CTP synthase 1 (ctps1) of Danio rerio (Zebrafish).